Reading from the N-terminus, the 341-residue chain is N-acetyl-gamma-glutamyl-phosphate reductase (341 aa).

Cys-147 is a catalytic residue.

This sequence belongs to the NAGSA dehydrogenase family. Type 1 subfamily.

It is found in the cytoplasm. It carries out the reaction N-acetyl-L-glutamate 5-semialdehyde + phosphate + NADP(+) = N-acetyl-L-glutamyl 5-phosphate + NADPH + H(+). It participates in amino-acid biosynthesis; L-arginine biosynthesis; N(2)-acetyl-L-ornithine from L-glutamate: step 3/4. Catalyzes the NADPH-dependent reduction of N-acetyl-5-glutamyl phosphate to yield N-acetyl-L-glutamate 5-semialdehyde. This Staphylococcus epidermidis (strain ATCC 35984 / DSM 28319 / BCRC 17069 / CCUG 31568 / BM 3577 / RP62A) protein is N-acetyl-gamma-glutamyl-phosphate reductase.